Consider the following 164-residue polypeptide: Magnesium-dependent phosphatase 1 (164 aa).

Asp-11 acts as the Nucleophile in catalysis. Residue Asp-11 coordinates Mg(2+). The phosphate site is built by Leu-12 and Asp-13. Residue Asp-13 participates in Mg(2+) binding. The active-site Proton donor is the Asp-13. Position 20 (Trp-20) interacts with substrate. Phosphate contacts are provided by Ser-69, Arg-70, and Lys-100. Residue Arg-70 participates in substrate binding. Asp-123 contributes to the Mg(2+) binding site.

The protein belongs to the HAD-like hydrolase superfamily. It depends on Mg(2+) as a cofactor.

It carries out the reaction O-phospho-L-tyrosyl-[protein] + H2O = L-tyrosyl-[protein] + phosphate. Its activity is regulated as follows. Inhibited by vanadate and zinc, and slightly by calcium. Functionally, magnesium-dependent phosphatase which may act as a tyrosine phosphatase. This chain is Magnesium-dependent phosphatase 1 (Mdp1), found in Mus musculus (Mouse).